The following is a 92-amino-acid chain: Large ribosomal subunit protein eL31 (92 aa).

Ser-2 carries the post-translational modification N-acetylserine.

This sequence belongs to the eukaryotic ribosomal protein eL31 family. As to quaternary structure, part of the 50S ribosomal subunit.

Binds to the 23S rRNA. Located at the polypeptide exit tunnel on the outside of the subunit. The polypeptide is Large ribosomal subunit protein eL31 (rpl31e) (Haloarcula marismortui (strain ATCC 43049 / DSM 3752 / JCM 8966 / VKM B-1809) (Halobacterium marismortui)).